Reading from the N-terminus, the 448-residue chain is B-cell lymphoma 3 protein homolog (448 aa).

Positions 1–54 (MPRCPAGAMDEGPVDLRTRPKGTPGAALPLRKRPLRPASPEPATTRSPAGPLDA) are disordered. S39 is modified (phosphoserine). 7 ANK repeats span residues 129 to 161 (DGDTPLHIAVVQNNIAAVYRILSLFKLGSREVD), 166 to 195 (LRQTPLHLAVITTLPDMVRLLVTAGASPMA), 199 to 228 (HGQTAIHLACEHRSPSCLQALLDSATSGSV), 236 to 265 (EGLTALHVAVNTGCQEAVLLLLERGADIDA), 270 to 299 (SGRSPLIHAVENNSLNMVQLLLLHGANVNA), 303 to 332 (SGSSALHSASGRGLLPLVRTLVRSGADSGL), and 333 to 362 (KNCHNDTPLMVARSRRVIDILRGKASRAAS). The disordered stretch occupies residues 356–448 (KASRAASGSQ…VPPSPAPGSS (93 aa)). The segment covering 361-376 (ASGSQPEPSPDQSATN) has biased composition (polar residues). S369 bears the Phosphoserine mark. Residues 377–398 (SPESSSRLSSNGLQSSPSSSPS) show a composition bias toward low complexity. Phosphoserine; by GSK3 is present on residues S396 and S400. Over residues 411–423 (TPQNFFLPTTSTP) the composition is skewed to polar residues. A compositionally biased stretch (low complexity) spans 425–436 (FLPFPGVLRGPG). The segment covering 437 to 448 (RPVPPSPAPGSS) has biased composition (pro residues).

Component of a complex consisting of the NF-kappa-B p52-p52 homodimer and BCL3. Component of a complex consisting of the NF-kappa-B p50-p50 homodimer and BCL3. Interacts with N4BP2, COPS5 and PIR. Interacts with CYLD. Post-translationally, polyubiquitinated. Ubiquitination via 'Lys-63'-linked ubiquitin chains is required for nuclear accumulation. Deubiquitinated by CYLD, which acts on 'Lys-63'-linked ubiquitin chains. Deubiquitination by CYLD prevents nuclear accumulation. Activated by phosphorylation.

It is found in the nucleus. The protein resides in the cytoplasm. It localises to the perinuclear region. Contributes to the regulation of transcriptional activation of NF-kappa-B target genes. In the cytoplasm, inhibits the nuclear translocation of the NF-kappa-B p50 subunit. In the nucleus, acts as a transcriptional activator that promotes transcription of NF-kappa-B target genes. Contributes to the regulation of cell proliferation. This Mus musculus (Mouse) protein is B-cell lymphoma 3 protein homolog (Bcl3).